We begin with the raw amino-acid sequence, 146 residues long: Large ribosomal subunit protein bL17 (146 aa).

The span at 124–134 (EASRATRAAAS) shows a compositional bias: low complexity. Positions 124–146 (EASRATRAAASKKAEEEAASEAE) are disordered.

The protein belongs to the bacterial ribosomal protein bL17 family. Part of the 50S ribosomal subunit. Contacts protein L32.

This chain is Large ribosomal subunit protein bL17, found in Corynebacterium kroppenstedtii (strain DSM 44385 / JCM 11950 / CIP 105744 / CCUG 35717).